We begin with the raw amino-acid sequence, 33 residues long: Brevinin-2DYa (33 aa).

A disulfide bridge links Cys27 with Cys33.

As to expression, expressed by the skin glands.

The protein resides in the secreted. Its function is as follows. Antimicrobial peptide. In Rana dybowskii (Dybovsky's frog), this protein is Brevinin-2DYa.